Consider the following 175-residue polypeptide: MDIAIHHPWIRRPFFPFHSPSRLFDQFFGEHLLESDLFPASTSLSPFYLRPPSFLRAPSWIDTGLSEVRLEKDRFSVNLDVKHFSPEELKVKVLGDVIEVHGKHEERQDEHGFISREFHRKYRIPADVDPLTITSSLSSDGVLTMNGPRKQASGPERTIPITREEKPAVTAAPKK.

At M1 the chain carries N-acetylmethionine. S19 carries the post-translational modification Phosphoserine. O-linked (GlcNAc) serine glycosylation is present at S41. 2 positions are modified to phosphoserine: S45 and S59. The sHSP domain maps to 56–164 (RAPSWIDTGL…PERTIPITRE (109 aa)). H83 contributes to the Zn(2+) binding site. The residue at position 92 (K92) is an N6-acetyllysine. 4 residues coordinate Zn(2+): H104, E106, H111, and H119. Positions 139–175 (SDGVLTMNGPRKQASGPERTIPITREEKPAVTAAPKK) are disordered. Residue K166 is modified to N6-acetyllysine. The O-linked (GlcNAc) threonine glycan is linked to T170.

The protein belongs to the small heat shock protein (HSP20) family. Heteromer composed of three CRYAA and one CRYAB subunits. Aggregates with homologous proteins, including the small heat shock protein HSPB1, to form large heteromeric complexes. Inter-subunit bridging via zinc ions enhances stability, which is crucial as there is no protein turn over in the lens. Interacts with HSPBAP1 and TTN/titin. Interacts with TMEM109; in the cellular response to DNA damage. Interacts with DES; binds rapidly during early stages of DES filament assembly and a reduced binding seen in the later stages. Interacts with ATP6V1A and with MTOR, forming a ternary complex.

It is found in the cytoplasm. It localises to the nucleus. Its subcellular location is the secreted. The protein resides in the lysosome. In terms of biological role, may contribute to the transparency and refractive index of the lens. Has chaperone-like activity, preventing aggregation of various proteins under a wide range of stress conditions. In lens epithelial cells, stabilizes the ATP6V1A protein, preventing its degradation by the proteasome. This Ovis aries (Sheep) protein is Alpha-crystallin B chain (CRYAB).